Reading from the N-terminus, the 500-residue chain is Lycopene beta cyclase, chloroplastic (500 aa).

A chloroplast-targeting transit peptide spans 1 to 81 (MDTLLKTPNK…ELPMYDPSKG (81 aa)). 86-114 (LAVVGGGPAGLAVAQQVSEAGLSVVSIDP) provides a ligand contact to NAD(+).

Belongs to the lycopene cyclase family.

The protein localises to the plastid. Its subcellular location is the chloroplast. The enzyme catalyses a carotenoid psi-end group = a carotenoid beta-end derivative. The protein operates within carotenoid biosynthesis; beta-carotene biosynthesis. It participates in carotenoid biosynthesis; beta-zeacarotene biosynthesis. In terms of biological role, catalyzes the double cyclization reaction which converts lycopene to beta-carotene and neurosporene to beta-zeacarotene. In Nicotiana tabacum (Common tobacco), this protein is Lycopene beta cyclase, chloroplastic (LCY1).